A 258-amino-acid polypeptide reads, in one-letter code: TLC domain-containing protein 4-A (258 aa).

Transmembrane regions (helical) follow at residues 5-25 (LISYCVVTGSFLGFQLLFSAI), 52-72 (FVSTNHALIVGSACLYILAYD), 85-105 (FWVKMNVAITCGYLVQDLLLL), 116-132 (YMVCHHLAVFYSYGYVL), 171-191 (PVLLNGLAMALVFFIVRIAVI), and 212-232 (IGPQVAWIVSCVVLDILNVFW). In terms of domain architecture, TLC spans 43-245 (GKQCEWDSRF…IARGFYKVVK (203 aa)).

Belongs to the TLCD4 family.

Its subcellular location is the membrane. This is TLC domain-containing protein 4-A (tlcd4-a) from Xenopus laevis (African clawed frog).